The chain runs to 56 residues: UPF0391 membrane protein Rru_A0119 (56 aa).

Transmembrane regions (helical) follow at residues W4–A24 and I30–F50.

It belongs to the UPF0391 family.

The protein resides in the cell membrane. The protein is UPF0391 membrane protein Rru_A0119 of Rhodospirillum rubrum (strain ATCC 11170 / ATH 1.1.1 / DSM 467 / LMG 4362 / NCIMB 8255 / S1).